Here is a 456-residue protein sequence, read N- to C-terminus: Glutamate--tRNA ligase 2 (456 aa).

Residues Pro8–Asn18 carry the 'HIGH' region motif. The 'KMSKS' region signature appears at Gly249–Arg253. Residue Lys252 coordinates ATP.

This sequence belongs to the class-I aminoacyl-tRNA synthetase family. Glutamate--tRNA ligase type 1 subfamily. Monomer.

The protein localises to the cytoplasm. The enzyme catalyses tRNA(Glu) + L-glutamate + ATP = L-glutamyl-tRNA(Glu) + AMP + diphosphate. Functionally, catalyzes the attachment of glutamate to tRNA(Glu) in a two-step reaction: glutamate is first activated by ATP to form Glu-AMP and then transferred to the acceptor end of tRNA(Glu). The polypeptide is Glutamate--tRNA ligase 2 (Bartonella bacilliformis (strain ATCC 35685 / KC583 / Herrer 020/F12,63)).